Consider the following 78-residue polypeptide: DNA-directed RNA polymerase subunit omega (78 aa).

This sequence belongs to the RNA polymerase subunit omega family. As to quaternary structure, in cyanobacteria the RNAP catalytic core is composed of 2 alpha, 1 beta, 1 beta', 1 gamma and 1 omega subunit. When a sigma factor is associated with the core the holoenzyme is formed, which can initiate transcription.

The enzyme catalyses RNA(n) + a ribonucleoside 5'-triphosphate = RNA(n+1) + diphosphate. In terms of biological role, promotes RNA polymerase assembly. Latches the N- and C-terminal regions of the beta' subunit thereby facilitating its interaction with the beta and alpha subunits. In Nostoc punctiforme (strain ATCC 29133 / PCC 73102), this protein is DNA-directed RNA polymerase subunit omega.